Reading from the N-terminus, the 80-residue chain is Small ribosomal subunit protein uS17 (80 aa).

Belongs to the universal ribosomal protein uS17 family. In terms of assembly, part of the 30S ribosomal subunit.

Functionally, one of the primary rRNA binding proteins, it binds specifically to the 5'-end of 16S ribosomal RNA. This is Small ribosomal subunit protein uS17 from Brucella suis (strain ATCC 23445 / NCTC 10510).